The following is a 677-amino-acid chain: Methionine--tRNA ligase (677 aa).

Residues 15 to 25 (PYANGSIHLGH) carry the 'HIGH' region motif. Zn(2+) is bound by residues cysteine 146, cysteine 149, cysteine 159, and cysteine 162. The short motif at 333–337 (KMSKS) is the 'KMSKS' region element. Residue lysine 336 coordinates ATP. Positions 575–677 (DFAKVDLRVA…AGAKPGHQVK (103 aa)) constitute a tRNA-binding domain.

It belongs to the class-I aminoacyl-tRNA synthetase family. MetG type 1 subfamily. Homodimer. Zn(2+) serves as cofactor.

It localises to the cytoplasm. It catalyses the reaction tRNA(Met) + L-methionine + ATP = L-methionyl-tRNA(Met) + AMP + diphosphate. Its function is as follows. Is required not only for elongation of protein synthesis but also for the initiation of all mRNA translation through initiator tRNA(fMet) aminoacylation. The sequence is that of Methionine--tRNA ligase (metG) from Escherichia coli (strain K12).